Consider the following 615-residue polypeptide: 1-deoxy-D-xylulose-5-phosphate synthase (615 aa).

Thiamine diphosphate contacts are provided by residues histidine 76 and 117–119 (GHS). Residue aspartate 148 coordinates Mg(2+). Thiamine diphosphate is bound by residues 149-150 (GA), asparagine 177, tyrosine 284, and glutamate 365. Position 177 (asparagine 177) interacts with Mg(2+).

The protein belongs to the transketolase family. DXPS subfamily. Homodimer. Mg(2+) is required as a cofactor. Thiamine diphosphate serves as cofactor.

The catalysed reaction is D-glyceraldehyde 3-phosphate + pyruvate + H(+) = 1-deoxy-D-xylulose 5-phosphate + CO2. It functions in the pathway metabolic intermediate biosynthesis; 1-deoxy-D-xylulose 5-phosphate biosynthesis; 1-deoxy-D-xylulose 5-phosphate from D-glyceraldehyde 3-phosphate and pyruvate: step 1/1. Functionally, catalyzes the acyloin condensation reaction between C atoms 2 and 3 of pyruvate and glyceraldehyde 3-phosphate to yield 1-deoxy-D-xylulose-5-phosphate (DXP). This Francisella tularensis subsp. holarctica (strain FTNF002-00 / FTA) protein is 1-deoxy-D-xylulose-5-phosphate synthase.